Consider the following 667-residue polypeptide: Small ribosomal subunit protein mS39 (667 aa).

The transit peptide at M1–H11 directs the protein to the mitochondrion. The segment at E199–D226 is disordered. PPR repeat units follow at residues N249 to A283, D284 to P323, N324 to P360, S361 to P400, S482 to N516, and T565 to P599.

This sequence belongs to the mitochondrion-specific ribosomal protein mS39 family.

It is found in the mitochondrion. In terms of biological role, mitochondrial RNA-binding protein that may have a role in mitochondrial translation. This Danio rerio (Zebrafish) protein is Small ribosomal subunit protein mS39 (ptcd3).